Reading from the N-terminus, the 298-residue chain is Acetyl-coenzyme A carboxylase carboxyl transferase subunit beta (298 aa).

Positions 1-21 (MNQEVKSGKVLSPSTPWTQRP) are disordered. Positions 41–298 (PTIECPECHA…RLVSKLMNLP (258 aa)) constitute a CoA carboxyltransferase N-terminal domain. Positions 45, 48, 64, and 67 each coordinate Zn(2+). A C4-type zinc finger spans residues 45–67 (CPECHALVTRTAISFNAYVCPQC).

Belongs to the AccD/PCCB family. As to quaternary structure, acetyl-CoA carboxylase is a heterohexamer composed of biotin carboxyl carrier protein (AccB), biotin carboxylase (AccC) and two subunits each of ACCase subunit alpha (AccA) and ACCase subunit beta (AccD). Zn(2+) is required as a cofactor.

The protein localises to the cytoplasm. It catalyses the reaction N(6)-carboxybiotinyl-L-lysyl-[protein] + acetyl-CoA = N(6)-biotinyl-L-lysyl-[protein] + malonyl-CoA. The protein operates within lipid metabolism; malonyl-CoA biosynthesis; malonyl-CoA from acetyl-CoA: step 1/1. Functionally, component of the acetyl coenzyme A carboxylase (ACC) complex. Biotin carboxylase (BC) catalyzes the carboxylation of biotin on its carrier protein (BCCP) and then the CO(2) group is transferred by the transcarboxylase to acetyl-CoA to form malonyl-CoA. The protein is Acetyl-coenzyme A carboxylase carboxyl transferase subunit beta of Acinetobacter baumannii (strain AYE).